The sequence spans 62 residues: Large ribosomal subunit protein uL30 (62 aa).

It belongs to the universal ribosomal protein uL30 family. As to quaternary structure, part of the 50S ribosomal subunit.

This chain is Large ribosomal subunit protein uL30, found in Gluconobacter oxydans (strain 621H) (Gluconobacter suboxydans).